We begin with the raw amino-acid sequence, 277 residues long: MPELPEVATVITELKSCVLNKPVKQVKVHLDKVLKNTNVKQLNDALVNHSFVDIKRRGKYIIFCLSNGLFLVSHLRMEGKYFFEAKGSQFDLNHVLVEFLFQDGDQLNYHDTRQFGTFHLFNRYQFENARELNKLALDPLDQEFNHQAIFNKGHKSNKKIKTFILDQTNISGIGNIYADEILFASKIHPETLAKNLNLSQYQLICQNATDILKKAVEMKGTTIGTFTFKKDHTGGYQHFLKIHGKKGKQCQSCNTTIIKKKINGRGSYICEKCQIQR.

The active-site Schiff-base intermediate with DNA is P2. E3 acts as the Proton donor in catalysis. K59 functions as the Proton donor; for beta-elimination activity in the catalytic mechanism. DNA-binding residues include H94 and R113. Residues 241–275 (KIHGKKGKQCQSCNTTIIKKKINGRGSYICEKCQI) form an FPG-type zinc finger. Residue R265 is the Proton donor; for delta-elimination activity of the active site.

It belongs to the FPG family. As to quaternary structure, monomer. Zn(2+) serves as cofactor.

It carries out the reaction Hydrolysis of DNA containing ring-opened 7-methylguanine residues, releasing 2,6-diamino-4-hydroxy-5-(N-methyl)formamidopyrimidine.. The enzyme catalyses 2'-deoxyribonucleotide-(2'-deoxyribose 5'-phosphate)-2'-deoxyribonucleotide-DNA = a 3'-end 2'-deoxyribonucleotide-(2,3-dehydro-2,3-deoxyribose 5'-phosphate)-DNA + a 5'-end 5'-phospho-2'-deoxyribonucleoside-DNA + H(+). Its function is as follows. Involved in base excision repair of DNA damaged by oxidation or by mutagenic agents. Acts as a DNA glycosylase that recognizes and removes damaged bases. Has a preference for oxidized purines, such as 7,8-dihydro-8-oxoguanine (8-oxoG). Has AP (apurinic/apyrimidinic) lyase activity and introduces nicks in the DNA strand. Cleaves the DNA backbone by beta-delta elimination to generate a single-strand break at the site of the removed base with both 3'- and 5'-phosphates. The protein is Formamidopyrimidine-DNA glycosylase (mutM) of Mycoplasma pneumoniae (strain ATCC 29342 / M129 / Subtype 1) (Mycoplasmoides pneumoniae).